Consider the following 77-residue polypeptide: Cell division topological specificity factor (77 aa).

The protein belongs to the MinE family.

Its function is as follows. Prevents the cell division inhibition by proteins MinC and MinD at internal division sites while permitting inhibition at polar sites. This ensures cell division at the proper site by restricting the formation of a division septum at the midpoint of the long axis of the cell. This is Cell division topological specificity factor from Helicobacter acinonychis (strain Sheeba).